Reading from the N-terminus, the 65-residue chain is Large ribosomal subunit protein bL35 (65 aa).

Residues 1–26 (MPKIKTLRGAAKRFKKTASGGFKRKQ) form a disordered region. The segment covering 10–26 (AAKRFKKTASGGFKRKQ) has biased composition (basic residues).

It belongs to the bacterial ribosomal protein bL35 family.

The chain is Large ribosomal subunit protein bL35 from Histophilus somni (strain 2336) (Haemophilus somnus).